A 349-amino-acid chain; its full sequence is Ferredoxin--NADP reductase 1 (349 aa).

FAD contacts are provided by glutamate 36, lysine 44, tyrosine 48, valine 88, leucine 123, aspartate 290, and serine 331.

It belongs to the ferredoxin--NADP reductase type 2 family. In terms of assembly, homodimer. Requires FAD as cofactor.

The enzyme catalyses 2 reduced [2Fe-2S]-[ferredoxin] + NADP(+) + H(+) = 2 oxidized [2Fe-2S]-[ferredoxin] + NADPH. The polypeptide is Ferredoxin--NADP reductase 1 (Bacillus licheniformis (strain ATCC 14580 / DSM 13 / JCM 2505 / CCUG 7422 / NBRC 12200 / NCIMB 9375 / NCTC 10341 / NRRL NRS-1264 / Gibson 46)).